The chain runs to 424 residues: Enolase (424 aa).

Glutamine 165 serves as a coordination point for (2R)-2-phosphoglycerate. Residue glutamate 207 is the Proton donor of the active site. Positions 244, 283, and 310 each coordinate Mg(2+). 4 residues coordinate (2R)-2-phosphoglycerate: lysine 335, arginine 364, serine 365, and lysine 386. The active-site Proton acceptor is lysine 335.

This sequence belongs to the enolase family. It depends on Mg(2+) as a cofactor.

It localises to the cytoplasm. It is found in the secreted. The protein resides in the cell surface. It carries out the reaction (2R)-2-phosphoglycerate = phosphoenolpyruvate + H2O. The protein operates within carbohydrate degradation; glycolysis; pyruvate from D-glyceraldehyde 3-phosphate: step 4/5. Functionally, catalyzes the reversible conversion of 2-phosphoglycerate (2-PG) into phosphoenolpyruvate (PEP). It is essential for the degradation of carbohydrates via glycolysis. This Chlamydia trachomatis serovar D (strain ATCC VR-885 / DSM 19411 / UW-3/Cx) protein is Enolase.